Consider the following 160-residue polypeptide: Large ribosomal subunit protein uL15 (160 aa).

Basic and acidic residues predominate over residues 1–13 (MKLHELSDNDGAA). The disordered stretch occupies residues 1 to 42 (MKLHELSDNDGAAKKRKRVGRGPGSGTGKMGGRGIKGQKSRS). Residues 21-35 (RGPGSGTGKMGGRGI) show a composition bias toward gly residues.

Belongs to the universal ribosomal protein uL15 family. Part of the 50S ribosomal subunit.

Functionally, binds to the 23S rRNA. This Roseobacter denitrificans (strain ATCC 33942 / OCh 114) (Erythrobacter sp. (strain OCh 114)) protein is Large ribosomal subunit protein uL15.